A 399-amino-acid polypeptide reads, in one-letter code: uncharacterized protein (399 aa).

Positions 375–399 are disordered; the sequence is AAGGHRGSHGKSEQAATVRVVDDRR.

It belongs to the mycobacterial PPE family.

This is an uncharacterized protein from Mycobacterium tuberculosis (strain ATCC 25618 / H37Rv).